Here is a 38-residue protein sequence, read N- to C-terminus: Alpha-conotoxin PeIA (38 aa).

A propeptide spanning residues 1–21 (FDGRNAAANDKASDLVALTVR) is cleaved from the precursor. Cystine bridges form between Cys-23–Cys-29 and Cys-24–Cys-37. The ser-Xaa-Pro motif, crucial for potent interaction with nAChR stretch occupies residues 25 to 27 (SHP). Cysteine amide is present on Cys-37.

It belongs to the conotoxin A superfamily. The hydroxylation at position Pro-27 is critical, since an hydroxylation at this position decreases potency of the toxin to inhibit both alpha-3-beta-2 (1300-fold) and alpha-6/alpha-3-beta-2-beta-3 (130-fold) nAChRs. In terms of processing, a non-modified residue at position Pro-34 is critical, since a hydroxylation at this position decreases potency of the toxin to inhibit alpha-3-beta-2 (1-45-fold) and increases potency to inhibit alpha-6/alpha-3-beta-2-beta-3 (1.77-fold) nAChRs. Expressed by the venom duct.

It is found in the secreted. Functionally, alpha-conotoxins act on postsynaptic membranes, they bind to the nicotinic acetylcholine receptors (nAChR) and thus inhibit them. This synthetic peptide potently and reversibly blocks alpha-9-alpha-10/CHRNA9-CHRNA10 nAChR (IC(50)=6.9-54.9 nM), alpha-3-beta-2/CHRNA3-CHRNB2 (IC(50)=9.7-97.5 nM) and alpha-6/alpha-3-beta-2-beta-3 (CHRNA6/CHRNA3-CHRNB2-CHRNB3) (IC(50)=11.1-17.2 nM). It also inhibits alpha-6/alpha-3-beta-4 (CHRNA6/CHRNA3-CHRNB4) nAChR with a higher potency on human (IC(50)=6.75 nM) than on rat receptors (IC(50)=130-147 nM). Also shows a weak ability to inhibit alpha-3-beta-4/CHRNA3-CHRNB4 (IC(50)=480-1500 nM). This synthetic toxin also inhibits N-type calcium channels (Ca2.2/CACNA1B) (IC(50)=1.1 nM) via the activation of the G protein-coupled GABA(B) receptor in DRG neurons. Also exhibits inhibition of D.melanogaster alpha-7/CHRNA7 nAChRs. This chain is Alpha-conotoxin PeIA, found in Conus pergrandis (Grand cone).